The sequence spans 442 residues: Microfibrillar-associated protein 1 (442 aa).

Disordered stretches follow at residues 1–34 and 113–203; these read MSAP…YGEG and EVVS…PRLK. Acidic residues-rich tracts occupy residues 134-148 and 181-198; these read DTSE…DEEI and ESEL…EDEM.

The protein belongs to the MFAP1 family. In terms of assembly, component of the spliceosome B complex. Interacts with PRPF38A (via N-terminal interaction domain). As to expression, widely expressed.

Its subcellular location is the nucleus. Involved in pre-mRNA splicing as a component of the spliceosome. The chain is Microfibrillar-associated protein 1 from Gallus gallus (Chicken).